Consider the following 216-residue polypeptide: Trypsin inhibitor A (216 aa).

An N-terminal signal peptide occupies residues 1–24 (MKSTIFFLFLFCAFTTSYLPSAIA). Disulfide bonds link Cys63-Cys110 and Cys160-Cys169. The propeptide occupies 206-216 (AKKNHGLSRSE).

This sequence belongs to the protease inhibitor I3 (leguminous Kunitz-type inhibitor) family.

Functionally, inhibition of trypsin. This chain is Trypsin inhibitor A (KTI3), found in Glycine max (Soybean).